We begin with the raw amino-acid sequence, 235 residues long: Kinetochore protein Spc25 (235 aa).

The stretch at 44-106 (KNILSAKEAI…DMEAQLLRHT (63 aa)) forms a coiled coil. Positions 193–216 (EVAGASPVTPSGSERPKATSKHSN) are disordered.

This sequence belongs to the SPC25 family. Component of the Ndc80 complex, which is composed of Ndc80, Nuf2 and Spc25.

It is found in the nucleus. The protein localises to the chromosome. It localises to the centromere. The protein resides in the kinetochore. Functionally, acts as a component of the essential kinetochore-associated Ndc80 complex, which is required for chromosome segregation and spindle checkpoint activity during meiosis and mitosis. Required for kinetochore integrity and the organization of stable microtubule binding sites in the outer plate of the kinetochore. Participates in SAC signaling that responds specifically to disruptions in spindle microtubule dynamics. The NDC80 complex synergistically enhances the affinity of the SKA1 complex for microtubules and may allow the NDC80 complex to track depolymerizing microtubules. In Drosophila pseudoobscura pseudoobscura (Fruit fly), this protein is Kinetochore protein Spc25.